Consider the following 595-residue polypeptide: Probable serine/threonine-protein kinase KIN1 homolog (595 aa).

A Protein kinase domain is found at 67 to 316 (YKLIKTLGKG…LENVKKSKWT (250 aa)). Residues 73–81 (LGKGSCAKV) and K96 each bind ATP. The Proton acceptor role is filled by D188.

It belongs to the protein kinase superfamily. CAMK Ser/Thr protein kinase family. NIM1 subfamily.

The protein localises to the cytoplasm. Its subcellular location is the cell membrane. The enzyme catalyses L-seryl-[protein] + ATP = O-phospho-L-seryl-[protein] + ADP + H(+). It catalyses the reaction L-threonyl-[protein] + ATP = O-phospho-L-threonyl-[protein] + ADP + H(+). Serine/threonine protein kinase involved in regulation of exocytosis. The chain is Probable serine/threonine-protein kinase KIN1 homolog (KIN1) from Enterocytozoon bieneusi (strain H348) (Microsporidian parasite).